Reading from the N-terminus, the 614-residue chain is MNAQLSALQQQAQQLSESVTRPIPGSRKIHVPGSRPDLQVPMREIALTRTPTLFGGEENAPVTVYDTSGPYTDPEVRIDLSAGLPALRRGWVEERGDTERLEGLSSSFGRDREHDPKLDAVRFPARSLPRRARAGANVTQMHYARRGIITPEMEFVAIRENQRLEAIRDAGLLQQHPGEAFGASIQKIITPEFVRDEIARGRAVLPNNINHPESEPMIIGRNFLTKINANIGNSAVSSGIAEEVEKLVWAIRWGGDTVMDLSTGKHIHETREWIIRNSPVAIGTVPIYQALEKVDGRAEALTWEIFRDTLIEQAEQGVDYFTIHAGVLLRYVPLTAKRVTGIVSRGGSIMAKWCLAHHKENFLYTHFEDICEIMKAYDVTFSLGDGLRPGCIADANDAAQFGELETLGELTKIAWKHDVQTMIEGPGHVPMQLIKENMDKQLRECGEAPFYTLGPLTTDIAPGYDHITSAIGAAMIGWFGTAMLCYVTPKEHLGLPNRQDVRDGIMAYRIAAHAADLAKGHPGAQVRDNALSKARFEFRWEDQFHLGLDPEKAKEFHDETLPKDAHKLAHFCSMCGPHFCSMKITQDVREYAESGMKERSEAFRAAGAEVYHQG.

Residues M1–S16 show a composition bias toward low complexity. The segment at M1–P36 is disordered. Substrate is bound by residues N230, M259, Y288, H324, S344–G346, D385–R388, and E424. H428 is a binding site for Zn(2+). Y451 lines the substrate pocket. Zn(2+) is bound at residue H492. [4Fe-4S] cluster contacts are provided by C572, C575, and C580.

It belongs to the ThiC family. As to quaternary structure, homodimer. It depends on [4Fe-4S] cluster as a cofactor.

It carries out the reaction 5-amino-1-(5-phospho-beta-D-ribosyl)imidazole + S-adenosyl-L-methionine = 4-amino-2-methyl-5-(phosphooxymethyl)pyrimidine + CO + 5'-deoxyadenosine + formate + L-methionine + 3 H(+). Its pathway is cofactor biosynthesis; thiamine diphosphate biosynthesis. Its function is as follows. Catalyzes the synthesis of the hydroxymethylpyrimidine phosphate (HMP-P) moiety of thiamine from aminoimidazole ribotide (AIR) in a radical S-adenosyl-L-methionine (SAM)-dependent reaction. This Stenotrophomonas maltophilia (strain R551-3) protein is Phosphomethylpyrimidine synthase.